A 564-amino-acid polypeptide reads, in one-letter code: Protein CPR-5 (564 aa).

Residues 1–87 (MEALLLPPSP…TSNSNSTKRV (87 aa)) are disordered. The segment covering 12-28 (PQNQITNPANSKPNHQS) has biased composition (polar residues). A compositionally biased stretch (basic and acidic residues) spans 29–38 (GDVHKDETMM). Low complexity predominate over residues 69 to 84 (SSSYCSTSSTSNSNST). The next 5 helical transmembrane spans lie at 347-367 (IMDW…LGVY), 411-431 (VRVW…TYFL), 443-463 (PISF…KLCV), 472-492 (LWLI…VFTL), and 526-546 (VYVV…FATF).

In terms of assembly, interacts with SIM and SMR1. Ubiquitous.

It localises to the membrane. The protein localises to the nucleus membrane. Its function is as follows. May play a role in transcriptional processes. Negatively regulates the senescence and chlorotic lesions induced by biotic (e.g. pathogens) and abiotic (e.g. sugars, darkness) agents, probably by controlling programmed cell death (pcd). Negative regulator of plant programmed cell death (PCD) and effector-triggered immunity (ETI). Promotes cell division and endoreduplication (e.g. in trichomes). This chain is Protein CPR-5, found in Arabidopsis thaliana (Mouse-ear cress).